Here is a 685-residue protein sequence, read N- to C-terminus: Translation factor GUF1 homolog, mitochondrial (685 aa).

Residues 1–54 (MFSRLLNRGNGGVNKNITSGLLLRRTTTTTTRLSYINNSPTLSIRSFCSKSTTI) constitute a mitochondrion transit peptide. Residues 68-267 (DRIRNFSIIA…AVIDRIPPPQ (200 aa)) enclose the tr-type G domain. Residues 77–84 (AHIDHGKT), 160–164 (DTPGH), and 214–217 (NKID) each bind GTP.

The protein belongs to the TRAFAC class translation factor GTPase superfamily. Classic translation factor GTPase family. LepA subfamily.

It is found in the mitochondrion inner membrane. The enzyme catalyses GTP + H2O = GDP + phosphate + H(+). Functionally, promotes mitochondrial protein synthesis. May act as a fidelity factor of the translation reaction, by catalyzing a one-codon backward translocation of tRNAs on improperly translocated ribosomes. Binds to mitochondrial ribosomes in a GTP-dependent manner. The chain is Translation factor GUF1 homolog, mitochondrial (guf1) from Dictyostelium discoideum (Social amoeba).